A 1021-amino-acid chain; its full sequence is Sodium/potassium-transporting ATPase subunit alpha-1 (1021 aa).

A propeptide spanning residues 1–5 (MGKGV) is cleaved from the precursor. Residues 1-11 (MGKGVGRDKYE) show a composition bias toward basic and acidic residues. The segment at 1–36 (MGKGVGRDKYEPAAVSEHGDKKKAKKERDMDELKKE) is disordered. The Cytoplasmic segment spans residues 6–85 (GRDKYEPAAV…NALTPPPTTP (80 aa)). An N6-acetyllysine modification is found at Lys-9. Tyr-10 is modified (phosphotyrosine). Ser-16 carries the phosphoserine; by PKC modification. N6-acetyllysine is present on Lys-21. Residues 26 to 36 (KERDMDELKKE) show a composition bias toward basic and acidic residues. Phosphoserine is present on residues Ser-38 and Ser-45. Residues 80 to 82 (PPP) form a phosphoinositide-3 kinase binding region. The chain crosses the membrane as a helical span at residues 86 to 106 (EWVKFCRQLFGGFSMLLWIGA). Residues 107–129 (VLCFLAYGIQAATEEEPQNDNLY) are Extracellular-facing. Residues 130-150 (LGVVLSAVVIITGCFSYYQEA) traverse the membrane as a helical segment. At 151 to 286 (KSSKIMESFK…GGQTPIAAEI (136 aa)) the chain is on the cytoplasmic side. At Ser-226 the chain carries Phosphoserine. Tyr-258 bears the Phosphotyrosine mark. A helical transmembrane segment spans residues 287-306 (EHFIHIITGVAVFLGVSFFI). The Extracellular segment spans residues 307–318 (LSLILEYTWLEA). A helical transmembrane segment spans residues 319–336 (VIFLIGIIVANVPEGLLA). Over 337 to 770 (TVTVCLTLTA…EEGRLIFDNL (434 aa)) the chain is Cytoplasmic. Asp-374 functions as the 4-aspartylphosphate intermediate in the catalytic mechanism. Ser-450 and Ser-482 each carry phosphoserine. Lys-485 is a binding site for ATP. Phosphotyrosine is present on Tyr-540. Positions 594–715 (RAAVPDAVGK…QGAIVAVTGD (122 aa)) are mediates interaction with SCN7A. Phosphoserine is present on Ser-666. Mg(2+) is bound by residues Asp-715 and Asp-719. A helical transmembrane segment spans residues 771–790 (KKSIAYTLTSNIPEITPFLI). At 791 to 800 (FIIANIPLPL) the chain is on the extracellular side. Residues 801 to 821 (GTVTILCIDLGTDMVPAISLA) traverse the membrane as a helical segment. Over 822–841 (YEQAESDIMKRQPRNPQTDK) the chain is Cytoplasmic. The chain crosses the membrane as a helical span at residues 842–864 (LVNERLISMAYGQIGMIQALGGF). Residues 865–916 (FTYFVIMAENGFLPNHLLGIRVTWDDRWINDVEDSYGQQWTYEQRKIVEFTC) are Extracellular-facing. The helical transmembrane segment at 917–936 (HTAFFVSIVVVQWADLVICK) threads the bilayer. Residues 937-949 (TRRNSVFQQGMKN) are Cytoplasmic-facing. A Phosphoserine; by PKA modification is found at Ser-941. Residues 950–968 (KILIFGLFEETALAAFLSY) form a helical membrane-spanning segment. At 969-983 (CPGMGVALRMYPLKP) the chain is on the extracellular side. A helical membrane pass occupies residues 984 to 1004 (TWWFCAFPYSLLIFVYDEVRK). Over 1005 to 1021 (LIIRRRPGGWVEKETYY) the chain is Cytoplasmic.

Belongs to the cation transport ATPase (P-type) (TC 3.A.3) family. Type IIC subfamily. The sodium/potassium-transporting ATPase is composed of a catalytic alpha subunit, an auxiliary non-catalytic beta subunit and an additional regulatory subunit. Interacts with regulatory subunit FXYD1. Interacts with regulatory subunit FXYD3. Interacts with SIK1. Interacts with SLC35G1 and STIM1. Interacts with CLN3; this interaction regulates the sodium/potassium-transporting ATPase complex localization at the plasma membrane. Interacts with SCN7A; activates ATP1A1 P-type sodium:potassium-exchanging transporter activity which indirectly signals to nearby neurons to regulate sodium homeostasis. Phosphorylation on Tyr-10 modulates pumping activity. Phosphorylation of Ser-941 by PKA modulates the response of ATP1A1 to PKC. Dephosphorylation by protein phosphatase 2A (PP2A) following increases in intracellular sodium, leading to increase catalytic activity.

The protein localises to the cell membrane. It localises to the basolateral cell membrane. Its subcellular location is the sarcolemma. The protein resides in the cell projection. It is found in the axon. The protein localises to the melanosome. The enzyme catalyses K(+)(out) + Na(+)(in) + ATP + H2O = K(+)(in) + Na(+)(out) + ADP + phosphate + H(+). Specifically inhibited by cardiac glycosides such as digoxin or ouabain. Its function is as follows. This is the catalytic component of the active enzyme, which catalyzes the hydrolysis of ATP coupled with the exchange of sodium and potassium ions across the plasma membrane. This action creates the electrochemical gradient of sodium and potassium ions, providing the energy for active transport of various nutrients. Could also be part of an osmosensory signaling pathway that senses body-fluid sodium levels and controls salt intake behavior as well as voluntary water intake to regulate sodium homeostasis. This is Sodium/potassium-transporting ATPase subunit alpha-1 (ATP1A1) from Ovis aries (Sheep).